The chain runs to 397 residues: Acetate kinase 2 (397 aa).

Residue asparagine 10 coordinates Mg(2+). Position 17 (lysine 17) interacts with ATP. Arginine 90 provides a ligand contact to substrate. Aspartate 147 (proton donor/acceptor) is an active-site residue. Residues 207–211 (HLGNG), 281–283 (DAR), and 329–333 (GIGEN) each bind ATP. Glutamate 385 serves as a coordination point for Mg(2+).

This sequence belongs to the acetokinase family. As to quaternary structure, homodimer. It depends on Mg(2+) as a cofactor. Requires Mn(2+) as cofactor.

The protein resides in the cytoplasm. It carries out the reaction acetate + ATP = acetyl phosphate + ADP. It participates in metabolic intermediate biosynthesis; acetyl-CoA biosynthesis; acetyl-CoA from acetate: step 1/2. Functionally, catalyzes the formation of acetyl phosphate from acetate and ATP. Can also catalyze the reverse reaction. The protein is Acetate kinase 2 of Vibrio vulnificus (strain CMCP6).